The chain runs to 289 residues: 4-hydroxy-tetrahydrodipicolinate synthase (289 aa).

Thr-44 is a binding site for pyruvate. Tyr-132 functions as the Proton donor/acceptor in the catalytic mechanism. Residue Lys-161 is the Schiff-base intermediate with substrate of the active site. Residue Ile-201 participates in pyruvate binding.

Belongs to the DapA family. Homotetramer; dimer of dimers.

Its subcellular location is the cytoplasm. It catalyses the reaction L-aspartate 4-semialdehyde + pyruvate = (2S,4S)-4-hydroxy-2,3,4,5-tetrahydrodipicolinate + H2O + H(+). The protein operates within amino-acid biosynthesis; L-lysine biosynthesis via DAP pathway; (S)-tetrahydrodipicolinate from L-aspartate: step 3/4. Catalyzes the condensation of (S)-aspartate-beta-semialdehyde [(S)-ASA] and pyruvate to 4-hydroxy-tetrahydrodipicolinate (HTPA). The polypeptide is 4-hydroxy-tetrahydrodipicolinate synthase (Methanocaldococcus jannaschii (strain ATCC 43067 / DSM 2661 / JAL-1 / JCM 10045 / NBRC 100440) (Methanococcus jannaschii)).